The sequence spans 1249 residues: Hyphally regulated cell wall protein 3 (1249 aa).

Residues 1-20 (MHLFKRIALTLWLIISSTLA) form the signal peptide. Asparagine 373 carries N-linked (GlcNAc...) asparagine glycosylation. Residues 383-415 (FPTTSQSSSSETVASSSQPDSSSTEPSAFPSST) are compositionally biased toward low complexity. 2 disordered regions span residues 383 to 729 (FPTT…SGII) and 883 to 1217 (GLST…SSAS). Over residues 416-428 (GDSSAEPSITSDY) the composition is skewed to polar residues. Low complexity predominate over residues 429-716 (SSSELSVVPS…SEYTATWTTT (288 aa)). Asparagine 681 carries an N-linked (GlcNAc...) asparagine glycan. Polar residues-rich tracts occupy residues 717–729 (NSDGSVSTESGII) and 883–935 (GLST…PVPT). Asparagine 891, asparagine 940, asparagine 944, asparagine 948, asparagine 952, asparagine 956, asparagine 960, asparagine 966, asparagine 970, asparagine 974, asparagine 984, asparagine 988, asparagine 992, asparagine 996, asparagine 1000, asparagine 1010, asparagine 1014, asparagine 1018, asparagine 1022, asparagine 1026, asparagine 1032, asparagine 1046, asparagine 1050, asparagine 1058, asparagine 1062, asparagine 1072, asparagine 1076, asparagine 1080, asparagine 1086, asparagine 1090, asparagine 1094, asparagine 1098, asparagine 1114, asparagine 1118, asparagine 1122, asparagine 1128, asparagine 1132, asparagine 1136, asparagine 1140, asparagine 1150, asparagine 1154, asparagine 1158, asparagine 1172, asparagine 1180, and asparagine 1186 each carry an N-linked (GlcNAc...) asparagine glycan. Residues 941 to 959 (GSNNGSDNGSNNGSNNGSN) are compositionally biased toward low complexity. Positions 960 to 982 (NGSGSGNGSNNGSNNGSGSGNGF) are enriched in gly residues. Over residues 983 to 1043 (NNGSDNGSNN…SNSGSDSGNG (61 aa)) the composition is skewed to low complexity. Positions 1062-1078 (NGSGSGGESNNGSGNGS) are enriched in gly residues. The span at 1079–1097 (DNGSSPDNGSNNGSNNGSN) shows a compositional bias: low complexity. Residues 1139–1167 (NNGSNSGSNSDNGSNNSSGNGSSSDLGSV) show a composition bias toward low complexity. Composition is skewed to low complexity over residues 1175–1194 (NEGSSNESGANNGSNNGAGA) and 1205–1217 (SPSADSGSTSSAS). An N-linked (GlcNAc...) asparagine glycan is attached at asparagine 1225. The GPI-anchor amidated asparagine moiety is linked to residue asparagine 1225. Residues 1226-1249 (GSGKLLNGKVLTLSVLSSMVVVFL) constitute a propeptide, removed in mature form.

Belongs to the HYR1/IFF family. The GPI-anchor is attached to the protein in the endoplasmic reticulum and serves to target the protein to the cell surface. There, the glucosamine-inositol phospholipid moiety is cleaved off and the GPI-modified mannoprotein is covalently attached via its lipidless GPI glycan remnant to the 1,6-beta-glucan of the outer cell wall layer.

It localises to the secreted. The protein localises to the cell wall. It is found in the membrane. In terms of biological role, GPI-anchored cell wall protein involved in cell wall organization, hyphal growth, as well as in host-fungal interaction and virulence. In Candida albicans (strain SC5314 / ATCC MYA-2876) (Yeast), this protein is Hyphally regulated cell wall protein 3 (HYR3).